The chain runs to 636 residues: Threonine--tRNA ligase (636 aa).

Residues Met1–Thr59 enclose the TGS domain. Residues Asp240–Pro531 form a catalytic region. Cys331, His382, and His508 together coordinate Zn(2+).

This sequence belongs to the class-II aminoacyl-tRNA synthetase family. As to quaternary structure, homodimer. It depends on Zn(2+) as a cofactor.

The protein resides in the cytoplasm. The catalysed reaction is tRNA(Thr) + L-threonine + ATP = L-threonyl-tRNA(Thr) + AMP + diphosphate + H(+). Its function is as follows. Catalyzes the attachment of threonine to tRNA(Thr) in a two-step reaction: L-threonine is first activated by ATP to form Thr-AMP and then transferred to the acceptor end of tRNA(Thr). Also edits incorrectly charged L-seryl-tRNA(Thr). This chain is Threonine--tRNA ligase, found in Vesicomyosocius okutanii subsp. Calyptogena okutanii (strain HA).